The following is a 167-amino-acid chain: Large ribosomal subunit protein uL10 (167 aa).

It belongs to the universal ribosomal protein uL10 family. Part of the ribosomal stalk of the 50S ribosomal subunit. The N-terminus interacts with L11 and the large rRNA to form the base of the stalk. The C-terminus forms an elongated spine to which L12 dimers bind in a sequential fashion forming a multimeric L10(L12)X complex.

Forms part of the ribosomal stalk, playing a central role in the interaction of the ribosome with GTP-bound translation factors. This chain is Large ribosomal subunit protein uL10, found in Psychromonas ingrahamii (strain DSM 17664 / CCUG 51855 / 37).